A 298-amino-acid polypeptide reads, in one-letter code: ATP phosphoribosyltransferase (298 aa).

Belongs to the ATP phosphoribosyltransferase family. Long subfamily. Mg(2+) serves as cofactor.

It is found in the cytoplasm. It carries out the reaction 1-(5-phospho-beta-D-ribosyl)-ATP + diphosphate = 5-phospho-alpha-D-ribose 1-diphosphate + ATP. It participates in amino-acid biosynthesis; L-histidine biosynthesis; L-histidine from 5-phospho-alpha-D-ribose 1-diphosphate: step 1/9. Its activity is regulated as follows. Feedback inhibited by histidine. Functionally, catalyzes the condensation of ATP and 5-phosphoribose 1-diphosphate to form N'-(5'-phosphoribosyl)-ATP (PR-ATP). Has a crucial role in the pathway because the rate of histidine biosynthesis seems to be controlled primarily by regulation of HisG enzymatic activity. This Aeromonas salmonicida (strain A449) protein is ATP phosphoribosyltransferase.